We begin with the raw amino-acid sequence, 642 residues long: Pentatricopeptide repeat-containing protein At3g16010 (642 aa).

PPR repeat units follow at residues Asp-125–Ser-159, Ser-161–Pro-195, Thr-196–Phe-230, Asp-232–Pro-266, Thr-267–Pro-301, Thr-302–Pro-336, Asp-337–Pro-371, Thr-372–Pro-407, Ser-408–Pro-442, Cys-443–Asn-473, Ser-478–Pro-512, Asp-513–Ala-547, Asp-548–Pro-582, and Asp-583–Tyr-617.

This sequence belongs to the PPR family. P subfamily.

The sequence is that of Pentatricopeptide repeat-containing protein At3g16010 from Arabidopsis thaliana (Mouse-ear cress).